We begin with the raw amino-acid sequence, 488 residues long: UDP-N-acetylmuramoyl-L-alanyl-D-glutamate--2,6-diaminopimelate ligase (488 aa).

UDP-N-acetyl-alpha-D-muramoyl-L-alanyl-D-glutamate-binding positions include L24, S26, and 41-43 (HQV). 113-119 (GTNGKTT) contacts ATP. Residues N154, 155–156 (TT), S182, Q188, and R190 each bind UDP-N-acetyl-alpha-D-muramoyl-L-alanyl-D-glutamate. An N6-carboxylysine modification is found at K222. Residues R386, 410 to 413 (DNPR), G461, and E465 each bind meso-2,6-diaminopimelate. The Meso-diaminopimelate recognition motif signature appears at 410–413 (DNPR).

It belongs to the MurCDEF family. MurE subfamily. Requires Mg(2+) as cofactor. Carboxylation is probably crucial for Mg(2+) binding and, consequently, for the gamma-phosphate positioning of ATP.

Its subcellular location is the cytoplasm. The catalysed reaction is UDP-N-acetyl-alpha-D-muramoyl-L-alanyl-D-glutamate + meso-2,6-diaminopimelate + ATP = UDP-N-acetyl-alpha-D-muramoyl-L-alanyl-gamma-D-glutamyl-meso-2,6-diaminopimelate + ADP + phosphate + H(+). It participates in cell wall biogenesis; peptidoglycan biosynthesis. Functionally, catalyzes the addition of meso-diaminopimelic acid to the nucleotide precursor UDP-N-acetylmuramoyl-L-alanyl-D-glutamate (UMAG) in the biosynthesis of bacterial cell-wall peptidoglycan. The protein is UDP-N-acetylmuramoyl-L-alanyl-D-glutamate--2,6-diaminopimelate ligase of Haemophilus influenzae (strain PittGG).